A 2159-amino-acid polypeptide reads, in one-letter code: MPKRLLQYALSRLEILDTDALDLENLDIAWGKNSTFEFKDVGLRLKKLETLLQLPSTIALSKAKVLLLRLTIPVDVYSSPILVEVDGVDVQLRVKEEKGANSSRTNHDRLRKKSTSRSPGPDPALPTAEDLAASFLQTEPREEKAELEAAILGETQDISESITSSEDGDLEVPVGTGTALSLPAFMARFLQGIVDRLQVRVHGITFNVDVDIPAEGPTPNRTTDPVTVQLKIDDVDIEGVTHDIESAQTRGGKDITSLFKEGKKLICLSNIRGALITEANLFQTLSRSSSILSPAVPHSDISESRRTTEMRRSSEETQAMSVGSVRAFDGVASPSPRPSPASSLRASETSLPEIRRPSTPPRPLKISPSLKASIAASDGGRFDDASEDGHSNRSVSVHEDIDSSEMGDSILHNSAYLDQITESQLLDDHEGDDMRSSPSQYEQERHSAPSENSRTSTPRASTHISPSSSRTLGFNQFPSINRAHNMLQSTMLPPRPHTRFSLERVSHSQPTLPSSTAPLDRSYPVQQPESPLEVDAMSEADSSVSSTLNEEAGDDLAQSQLFSHEDAESMYMSAVSYTSAAPIPGGWADSGTESEDAKSPPATPRGPDAGREKLDNLENARHAVPLDGASDTTPLEQSTILPSGSLHKSARSISSMHPETPRRSPPLYQASSDISVESTASADDYSRMTKQIFSLDQIAIYIPAMNNPSSDPVDAVAESALFGSTFDGHSDSSRSRTMDLPGAFSTHLPREQPSRPSPRPALRTPVQPAKKIEEEKLIEVDVGNLLARFDVSVGRLIYKLVCQIQESMKQEPQAVASSKPTSSSTEPHLKISAKEISLRFLEQLQGTLGSRAAESQAKTLDSDVLLRTTLKGLDVSRKPSDSITKTSITLQKFLFGYAQENIISFNANLQMRASVRDLAASAGIDVSVDMYQSSDGTRFEVQTLPLHVAVDLQRLDETFSWFGGLSSVLNLGSSMASNATVTSNPVPKPKSRGVRFNTPIGPDDKTAAAQNKADVRIGGFILDLVGTECSVGVETSAVKLVSREEGIGVAINKIRLSGPHLKHSNEDPAILVDVSSTRVELLNAPKDNDIDRLLALIAPSKSKYDQDDDILLDTLLRQRQQGSVLRLTMDDLQVKMGNLQELSYLPDLGEEVARLSTVTKYLPDDDRPGLLSLVSVKKLGVNVDVNNTLGSLQLKATDLEVAQIPIPSLVAFSVATVSAYRNYSEELIGAGTDQTFMEPSLRTPTIMARLIGDEMEPIVRIKLWNLRIEYRVPTLMVLLGLADNATENDMSASIMASVATLRDLAQPRTSKGKGKSVEKASASSNSAAKPMTIDVVLTDCIVGLNPLGLPSKILVVLTEAHVAAVLPKDQNASATAELSKASLLVIDNVAHLATNVPSNRKRNSFDGGSNQVADLTTMGYVSVSYISSAKATVLLSVDDDGQNCLDVELRDDLFVLESCADSTQTLIGVLGKLAPPAPPPSKESKYRTKVIPVKDLLASLSGDAFGTAEGNYDFDNDFGDFGDVAEEHEGDLGFDSDYYKDETEEGYRQAVLEDIGEPLASLNLTTRDTRDGVLLDSFVEDSEIGNEALSFHEDHFGTGSVLEGSAHRWNSAKNTYDTSNESKVKKSPLKVCVRDVHIIWNLFDGYDWQATRDAISKAVQDVESKAIEKRARNERRPAFEQDIDDDEDTEIGDFLFNSIWVGIPNNRDPRELAAAINQELNDNATETESIATTNYTITPSRQGTGRKPKKLRLNRSKHHKITFELRGVCVDLVAFPPFSGETQSSIDVRVLDLEVFDHVPTSTWRKFATYMQDAGEREKGSNMVHIEILNVKPVSYLAASEIVLKVTILPLRLHVDQDALDFITRFFEFKEESDVIPGAPSEEPFLQRVEVNSVQVKLDFKPKRVDYAGLRSGHTTEFMNFLILDEADMTLRHTIIYGISGFEKMGKCLNDIWMPDIQRNQLPGILAGLAPVRSIVNVGGGFKDLVVIPMHEYKKDGRIVRSISKGAAAFAKTTGTELVKLGAKVAIGVQTVLQGAEDFLGPQDASIPHGNSSEDEEERKQISLYANQPVGVFQGLKGGYAGLQRDLVMARDAIIAVPGEVMEGGSAKGVLRAVRKHAPTVILRPAIGVAKGAGQVLMGATNSLDKRNLERADAKYKKH.

8 disordered regions span residues 98-126, 292-403, 428-475, 490-552, 585-612, 624-682, 726-766, and 980-1001; these read KGAN…PALP, LSPA…DIDS, DHEG…LGFN, TMLP…NEEA, GGWA…AGRE, VPLD…TASA, FDGH…RTPV, and TVTS…TPIG. Basic and acidic residues-rich tracts occupy residues 300–315 and 380–401; these read DISE…RSSE and GRFD…HEDI. Polar residues-rich tracts occupy residues 449–475, 507–517, and 540–549; these read PSEN…LGFN, HSQPTLPSSTA, and ADSSVSSTLN. Composition is skewed to polar residues over residues 630-642 and 669-681; these read SDTT…TILP and QASS…STAS. Over residues 728 to 737 the composition is skewed to basic and acidic residues; the sequence is GHSDSSRSRT.

Belongs to the ATG2 family.

The protein resides in the preautophagosomal structure membrane. The protein localises to the endoplasmic reticulum membrane. It catalyses the reaction a 1,2-diacyl-sn-glycero-3-phosphocholine(in) = a 1,2-diacyl-sn-glycero-3-phosphocholine(out). The catalysed reaction is a 1,2-diacyl-sn-glycero-3-phospho-L-serine(in) = a 1,2-diacyl-sn-glycero-3-phospho-L-serine(out). It carries out the reaction a 1,2-diacyl-sn-glycero-3-phosphoethanolamine(in) = a 1,2-diacyl-sn-glycero-3-phosphoethanolamine(out). In terms of biological role, lipid transfer protein required for autophagosome completion and peroxisome degradation. Tethers the edge of the isolation membrane (IM) to the endoplasmic reticulum (ER) and mediates direct lipid transfer from ER to IM for IM expansion. Atg2 binds to the ER exit site (ERES), which is the membrane source for autophagosome formation, using basic residues in its N-terminal region (NR) and to the expanding edge of the IM through its C-terminal region. The latter binding is assisted by an atg18-PtdIns3P interaction. Atg2 then extracts phospholipids from the membrane source using its NR and transfers them to atg9 to the IM through its predicted beta-sheet-rich structure for membrane expansion. The chain is Autophagy-related protein 2 (atg2) from Sclerotinia sclerotiorum (strain ATCC 18683 / 1980 / Ss-1) (White mold).